The chain runs to 157 residues: Ribosome maturation factor RimP (157 aa).

The protein belongs to the RimP family.

It localises to the cytoplasm. Functionally, required for maturation of 30S ribosomal subunits. This is Ribosome maturation factor RimP from Thermus thermophilus (strain ATCC BAA-163 / DSM 7039 / HB27).